The chain runs to 400 residues: Nicotinate phosphoribosyltransferase (400 aa).

His-220 bears the Phosphohistidine; by autocatalysis mark.

This sequence belongs to the NAPRTase family. In terms of processing, transiently phosphorylated on a His residue during the reaction cycle. Phosphorylation strongly increases the affinity for substrates and increases the rate of nicotinate D-ribonucleotide production. Dephosphorylation regenerates the low-affinity form of the enzyme, leading to product release.

The catalysed reaction is nicotinate + 5-phospho-alpha-D-ribose 1-diphosphate + ATP + H2O = nicotinate beta-D-ribonucleotide + ADP + phosphate + diphosphate. It functions in the pathway cofactor biosynthesis; NAD(+) biosynthesis; nicotinate D-ribonucleotide from nicotinate: step 1/1. In terms of biological role, catalyzes the synthesis of beta-nicotinate D-ribonucleotide from nicotinate and 5-phospho-D-ribose 1-phosphate at the expense of ATP. In Escherichia coli O7:K1 (strain IAI39 / ExPEC), this protein is Nicotinate phosphoribosyltransferase.